A 130-amino-acid polypeptide reads, in one-letter code: Small ribosomal subunit protein uS11 (130 aa).

The segment at 109–130 (EDVTPIPHDGTGRPGGKRGRRV) is disordered.

It belongs to the universal ribosomal protein uS11 family. As to quaternary structure, part of the 30S ribosomal subunit.

Functionally, located on the platform of the 30S subunit. In Methanosphaera stadtmanae (strain ATCC 43021 / DSM 3091 / JCM 11832 / MCB-3), this protein is Small ribosomal subunit protein uS11.